The chain runs to 186 residues: Ribosome-recycling factor (186 aa).

A disordered region spans residues 144 to 163 (EKDGVIGQDESRAQSERVQK).

This sequence belongs to the RRF family.

The protein localises to the cytoplasm. Functionally, responsible for the release of ribosomes from messenger RNA at the termination of protein biosynthesis. May increase the efficiency of translation by recycling ribosomes from one round of translation to another. This is Ribosome-recycling factor from Rhizobium johnstonii (strain DSM 114642 / LMG 32736 / 3841) (Rhizobium leguminosarum bv. viciae).